The following is a 78-amino-acid chain: Probable [Fe-S]-dependent transcriptional repressor (78 aa).

4 residues coordinate iron-sulfur cluster: C56, C61, C64, and C70.

This sequence belongs to the FeoC family.

Its function is as follows. May function as a transcriptional regulator that controls feoABC expression. The polypeptide is Probable [Fe-S]-dependent transcriptional repressor (Escherichia fergusonii (strain ATCC 35469 / DSM 13698 / CCUG 18766 / IAM 14443 / JCM 21226 / LMG 7866 / NBRC 102419 / NCTC 12128 / CDC 0568-73)).